Reading from the N-terminus, the 523-residue chain is GMP synthase [glutamine-hydrolyzing] (523 aa).

The Glutamine amidotransferase type-1 domain occupies 8 to 205; that stretch reads KILILDFGSQ…VVNICGCETK (198 aa). The active-site Nucleophile is the Cys85. Catalysis depends on residues His179 and Glu181. Residues 206–398 enclose the GMPS ATP-PPase domain; the sequence is WTAENIIEDA…LGLPAEMINR (193 aa). 233–239 contributes to the ATP binding site; it reads SGGVDSS.

In terms of assembly, homodimer.

It catalyses the reaction XMP + L-glutamine + ATP + H2O = GMP + L-glutamate + AMP + diphosphate + 2 H(+). It participates in purine metabolism; GMP biosynthesis; GMP from XMP (L-Gln route): step 1/1. In terms of biological role, catalyzes the synthesis of GMP from XMP. This chain is GMP synthase [glutamine-hydrolyzing] (guaA), found in Haemophilus influenzae (strain ATCC 51907 / DSM 11121 / KW20 / Rd).